A 484-amino-acid chain; its full sequence is Hexokinase-2 (484 aa).

In terms of domain architecture, Hexokinase spans 21–467 (PQLLEALKPI…SGVGAAVIAA (447 aa)). The segment at 75–208 (TGKETGSYLA…GVPIDVVALI (134 aa)) is hexokinase small subdomain. The tract at residues 209-456 (NDTTGTLVAS…DPIIIVPAED (248 aa)) is hexokinase large subdomain.

Belongs to the hexokinase family. Monomer.

It is found in the cytoplasm. The enzyme catalyses a D-hexose + ATP = a D-hexose 6-phosphate + ADP + H(+). The catalysed reaction is D-fructose + ATP = D-fructose 6-phosphate + ADP + H(+). It catalyses the reaction D-glucose + ATP = D-glucose 6-phosphate + ADP + H(+). It participates in carbohydrate metabolism; hexose metabolism. It functions in the pathway carbohydrate degradation; glycolysis; D-glyceraldehyde 3-phosphate and glycerone phosphate from D-glucose: step 1/4. Its function is as follows. Catalyzes the phosphorylation of hexose, such as D-glucose and D-fructose, to hexose 6-phosphate (D-glucose 6-phosphate and D-fructose 6-phosphate, respectively). Mediates the initial step of glycolysis by catalyzing phosphorylation of D-glucose to D-glucose 6-phosphate. In Candida albicans (strain SC5314 / ATCC MYA-2876) (Yeast), this protein is Hexokinase-2 (HXK2).